Here is a 256-residue protein sequence, read N- to C-terminus: 3-deoxy-manno-octulosonate cytidylyltransferase (256 aa).

Belongs to the KdsB family.

The protein resides in the cytoplasm. The catalysed reaction is 3-deoxy-alpha-D-manno-oct-2-ulosonate + CTP = CMP-3-deoxy-beta-D-manno-octulosonate + diphosphate. It functions in the pathway nucleotide-sugar biosynthesis; CMP-3-deoxy-D-manno-octulosonate biosynthesis; CMP-3-deoxy-D-manno-octulosonate from 3-deoxy-D-manno-octulosonate and CTP: step 1/1. The protein operates within bacterial outer membrane biogenesis; lipopolysaccharide biosynthesis. In terms of biological role, activates KDO (a required 8-carbon sugar) for incorporation into bacterial lipopolysaccharide in Gram-negative bacteria. The sequence is that of 3-deoxy-manno-octulosonate cytidylyltransferase from Histophilus somni (strain 129Pt) (Haemophilus somnus).